The sequence spans 884 residues: Translation initiation factor IF-2 (884 aa).

The segment at V93–Q288 is disordered. Over residues E99 to W209 the composition is skewed to basic and acidic residues. The segment covering Q216–H229 has biased composition (polar residues). The segment covering R231–R246 has biased composition (basic and acidic residues). A compositionally biased stretch (basic residues) spans S247–N261. The segment covering K262–A275 has biased composition (basic and acidic residues). In terms of domain architecture, tr-type G spans H383–K552. Residues G392–T399 are G1. A GTP-binding site is contributed by G392–T399. Positions G417–H421 are G2. Residues D438–G441 form a G3 region. GTP is bound by residues D438–H442 and N492–D495. A G4 region spans residues N492–D495. A G5 region spans residues S528–K530.

It belongs to the TRAFAC class translation factor GTPase superfamily. Classic translation factor GTPase family. IF-2 subfamily.

Its subcellular location is the cytoplasm. One of the essential components for the initiation of protein synthesis. Protects formylmethionyl-tRNA from spontaneous hydrolysis and promotes its binding to the 30S ribosomal subunits. Also involved in the hydrolysis of GTP during the formation of the 70S ribosomal complex. This is Translation initiation factor IF-2 from Yersinia pestis bv. Antiqua (strain Angola).